Consider the following 29-residue polypeptide: Lambda-theraphotoxin-Ec2a (29 aa).

Intrachain disulfides connect Cys-2–Cys-16, Cys-9–Cys-21, and Cys-15–Cys-25.

This sequence belongs to the neurotoxin 30 (phrixotoxin) family. Expressed by the venom gland.

Its subcellular location is the secreted. Insect-selective neurotoxin that potently blocks insect calcium-activated potassium (BKCa) channels (Slo-type) in cockroach dorsal unpaired median (DUM) neurons (IC(50)=3.7 nM). This occurs in the absence of any shifts in the voltage dependence of activation. At high concentrations (330 nM), it partially inhibits cockroach delayed-rectifier potassium channels (Kv) currents. May interact with the turret and/or loop region of the external entrance to the channel and does not project deeply into the pore of the channel. In vivo, does not show toxicity in mice after intracerebroventricular injection of up to 25 pmol/g (1.8 ug/20 g mouse). The sequence is that of Lambda-theraphotoxin-Ec2a from Eucratoscelus constrictus (African red-rump baboon spider).